The following is a 137-amino-acid chain: Large ribosomal subunit protein uL16 (137 aa).

It belongs to the universal ribosomal protein uL16 family. In terms of assembly, part of the 50S ribosomal subunit.

Binds 23S rRNA and is also seen to make contacts with the A and possibly P site tRNAs. The sequence is that of Large ribosomal subunit protein uL16 from Methylobacterium sp. (strain 4-46).